The primary structure comprises 482 residues: MKNILKKNEVNFLFYDYETFGIHTSLDKPAQFSSIRTDKNFNIMEEPKCFYCFPSDDYLPDPSSILITGITPEYTEKHGFNEYKFSKKIHDVLLKPNTCIIGYNNINFDDEITRNIFYRNFLDPYEWSWKNNNSRWDLLNVVRACYALRPSGIQWPKNEFGLPVFKLSDLTQKNNISHYNAHDATSDVYATIELAKLIKRKQPKLFDFFFKYRKKNELCRLIDIEKFTPIIYVSSYFGALRQNMSCILPLSWDLHNKNILISIDLFKDIDKLIVFCKTVSISNISIKDLFDLGIVLVYLNRCPILAPIKVIRKEDTNRLNFKKYFYYKKINLVKKNYFLIDLVKNVLLKKNENKNSLNVDLQIYDSFFNFHDKNLIKKISLTKSSDLKKMKLDFKDPRLKELFFRYKARNFFNILKNDEKKEWINYCLKTLNSFFLTGYIDKIESLLKIYSYDVKKNNLLSDLLKYVFKKYKKVFYKNINLS.

An Exonuclease domain is found at 13–194 (LFYDYETFGI…TSDVYATIEL (182 aa)). Mg(2+) is bound by residues Asp16, Glu18, and Asp187. Residue Glu18 participates in substrate binding. The region spanning 203 to 351 (PKLFDFFFKY…LVKNVLLKKN (149 aa)) is the ExoI SH3-like domain. An ExoI C-terminal domain is found at 355-471 (NSLNVDLQIY…DLLKYVFKKY (117 aa)).

Monomer. Interacts with ssb (via C-terminus); this interaction stimulates the exonuclease activity by recruiting the enzyme to its substrate. Mg(2+) is required as a cofactor.

The enzyme catalyses Exonucleolytic cleavage in the 3'- to 5'-direction to yield nucleoside 5'-phosphates.. Degrades single-stranded DNA (ssDNA) in a highly processive manner. Also functions as a DNA deoxyribophosphodiesterase that releases deoxyribose-phosphate moieties following the cleavage of DNA at an apurinic/apyrimidinic (AP) site by either an AP endonuclease or AP lyase. In Buchnera aphidicola subsp. Schizaphis graminum (strain Sg), this protein is Exodeoxyribonuclease I (sbcB).